Consider the following 144-residue polypeptide: Deoxyuridine 5'-triphosphate nucleotidohydrolase (144 aa).

Residues Arg-63–Gly-65, Asn-76, and Thr-80–Asp-82 each bind substrate.

The protein belongs to the dUTPase family. The cofactor is Mg(2+).

The enzyme catalyses dUTP + H2O = dUMP + diphosphate + H(+). It participates in pyrimidine metabolism; dUMP biosynthesis; dUMP from dCTP (dUTP route): step 2/2. This enzyme is involved in nucleotide metabolism: it produces dUMP, the immediate precursor of thymidine nucleotides and it decreases the intracellular concentration of dUTP so that uracil cannot be incorporated into DNA. In Phocaeicola vulgatus (strain ATCC 8482 / DSM 1447 / JCM 5826 / CCUG 4940 / NBRC 14291 / NCTC 11154) (Bacteroides vulgatus), this protein is Deoxyuridine 5'-triphosphate nucleotidohydrolase.